The sequence spans 551 residues: MSVLLETSLGDIVIDLHTELAPRSCTNFLKLCSKHYYKLNAFFRVEKDFLAQTGDPSNTGKGGASIWSQLPSTSQDSSTSTYFTPESSDGQLKHLKKGTVSFACFRKHVQGADEDGEGGSCELLAGSQFFVTLKDELDYLDGRHAPFGMVVEGHEPGGTLDKINHAFTDDQKRPLRDIRIRHVVVLEDPFADPDGFCAPSRSPSPTPCQVRALRLADDEDVHSDVDPASKEEMRRNADTNAAALTLEMVGDLPFAEIRPPENILFVCKLNPVTRSDDLELIFSRFGKILSCEVIKDKKTGDSLQYAFIEFDKKDDAERAYFKMQNVLVDDRRIWVDFSQSVSRLHGDWVKKRNAGSDAPRAHYQSGADEQSVDSYRPNAGGYQKRGDDRRHDRRDQPTARGDTSSWHSRQDSERSYRESNDDTRDRSNKRSRRHHDDVPQQSRSRSERHDSHRDHERHHLSRHVRPSDEGESKCRYEAHSHTRHDEHTRRHDSSSTAARRDEDRRSERSRHDRDRDRDRDRDRDREREHRRRTEDRRRHDDRQRSRDGSRR.

One can recognise a PPIase cyclophilin-type domain in the interval 1 to 185; that stretch reads MSVLLETSLG…RDIRIRHVVV (185 aa). Residues 54 to 88 form a disordered region; the sequence is GDPSNTGKGGASIWSQLPSTSQDSSTSTYFTPESS. Positions 66-88 are enriched in polar residues; sequence IWSQLPSTSQDSSTSTYFTPESS. Residues 262 to 340 form the RRM domain; sequence NILFVCKLNP…RRIWVDFSQS (79 aa). Residues 352–551 form a disordered region; sequence RNAGSDAPRA…RQRSRDGSRR (200 aa). 2 stretches are compositionally biased toward basic and acidic residues: residues 384 to 397 and 408 to 454; these read KRGD…RDQP and SRQD…SHRD. Residues 455 to 464 are compositionally biased toward basic residues; the sequence is HERHHLSRHV. The segment covering 465–551 has biased composition (basic and acidic residues); the sequence is RPSDEGESKC…RQRSRDGSRR (87 aa).

It belongs to the cyclophilin-type PPIase family. PPIL4 subfamily.

It localises to the nucleus. It carries out the reaction [protein]-peptidylproline (omega=180) = [protein]-peptidylproline (omega=0). Its function is as follows. PPIases accelerate the folding of proteins. It catalyzes the cis-trans isomerization of proline imidic peptide bonds in oligopeptides. This Mycosarcoma maydis (Corn smut fungus) protein is Peptidyl-prolyl cis-trans isomerase-like 4 (CYP6).